Here is a 555-residue protein sequence, read N- to C-terminus: Glutamine--tRNA ligase (555 aa).

Positions 34 to 44 (PEPNGYLHIGH) match the 'HIGH' region motif. ATP-binding positions include 35-37 (EPN) and 41-47 (HIGHAKS). Residues Asp-67 and Tyr-212 each coordinate L-glutamine. Residues Thr-231, 261 to 262 (RL), and 269 to 271 (MSK) contribute to the ATP site. The 'KMSKS' region signature appears at 268-272 (VMSKR).

Belongs to the class-I aminoacyl-tRNA synthetase family. In terms of assembly, monomer.

It is found in the cytoplasm. It catalyses the reaction tRNA(Gln) + L-glutamine + ATP = L-glutaminyl-tRNA(Gln) + AMP + diphosphate. This chain is Glutamine--tRNA ligase, found in Cronobacter sakazakii (strain ATCC BAA-894) (Enterobacter sakazakii).